Reading from the N-terminus, the 505-residue chain is MFS-type transporter oryN (505 aa).

The segment at methionine 1–proline 54 is disordered. The next 13 helical transmembrane spans lie at alanine 69–phenylalanine 89, valine 106–glycine 126, lysine 135–alanine 155, phenylalanine 166–methionine 186, glycine 193–methionine 213, phenylalanine 226–leucine 246, glycine 280–proline 300, isoleucine 301–valine 321, isoleucine 337–valine 357, leucine 376–threonine 396, isoleucine 401–phenylalanine 421, isoleucine 440–phenylalanine 460, and alanine 468–phenylalanine 488.

The protein belongs to the major facilitator superfamily. CAR1 family.

It localises to the membrane. In terms of biological role, MFS-type transporter; part of the gene cluster that mediates the biosynthesis of oryzines, natural products with an unusual maleidride backbone. The polypeptide is MFS-type transporter oryN (Aspergillus oryzae (strain ATCC 42149 / RIB 40) (Yellow koji mold)).